Consider the following 353-residue polypeptide: NADH-ubiquinone oxidoreductase chain 2 (353 aa).

A run of 8 helical transmembrane segments spans residues 4-24 (SVVLILLLNIIVSVVIVLSSH), 60-80 (FLVQAFSAAMILNVALVQLWL), 96-116 (IVLTLALCLKLGLFPCHFWFP), 139-159 (FIILVSVCNIISINVLTTLGC), 198-218 (IYVGCIMFVVYIVLSSTVFLI), 241-261 (GNVLVLVILSLGGLPPLTGFL), 274-294 (NLLVPCAILIVGSLLSLFFYL), and 330-350 (VLLSILSSMSILGLLLVPALW).

The protein belongs to the complex I subunit 2 family.

The protein resides in the mitochondrion inner membrane. The catalysed reaction is a ubiquinone + NADH + 5 H(+)(in) = a ubiquinol + NAD(+) + 4 H(+)(out). Functionally, core subunit of the mitochondrial membrane respiratory chain NADH dehydrogenase (Complex I) that is believed to belong to the minimal assembly required for catalysis. Complex I functions in the transfer of electrons from NADH to the respiratory chain. The immediate electron acceptor for the enzyme is believed to be ubiquinone. The sequence is that of NADH-ubiquinone oxidoreductase chain 2 (ND2) from Pisaster ochraceus (Ochre sea star).